A 378-amino-acid chain; its full sequence is UPF0754 membrane protein BCE_0952 (378 aa).

A run of 2 helical transmembrane segments spans residues 1–21 (MNIW…GGFT) and 357–377 (YLGA…LLFL).

Belongs to the UPF0754 family.

It localises to the cell membrane. This chain is UPF0754 membrane protein BCE_0952, found in Bacillus cereus (strain ATCC 10987 / NRS 248).